The sequence spans 100 residues: Urease subunit gamma (100 aa).

It belongs to the urease gamma subunit family. In terms of assembly, heterotrimer of UreA (gamma), UreB (beta) and UreC (alpha) subunits. Three heterotrimers associate to form the active enzyme.

It is found in the cytoplasm. It carries out the reaction urea + 2 H2O + H(+) = hydrogencarbonate + 2 NH4(+). It functions in the pathway nitrogen metabolism; urea degradation; CO(2) and NH(3) from urea (urease route): step 1/1. In Staphylococcus xylosus, this protein is Urease subunit gamma.